Reading from the N-terminus, the 141-residue chain is Hemoglobin subunit alpha (141 aa).

In terms of domain architecture, Globin spans 1 to 141 (VLSSKDKTNV…VSTVLTSKYR (141 aa)). A Phosphoserine modification is found at Ser-3. Position 7 is an N6-succinyllysine (Lys-7). Thr-8 carries the post-translational modification Phosphothreonine. Lys-11 carries the N6-succinyllysine modification. Lys-16 bears the N6-acetyllysine; alternate mark. Lys-16 bears the N6-succinyllysine; alternate mark. Tyr-24 is modified (phosphotyrosine). Position 40 is an N6-succinyllysine (Lys-40). Residue Ser-49 is modified to Phosphoserine. His-58 contributes to the O2 binding site. His-87 serves as a coordination point for heme b. Ser-102 is subject to Phosphoserine. Thr-108 bears the Phosphothreonine mark. The residue at position 124 (Ser-124) is a Phosphoserine. 2 positions are modified to phosphothreonine: Thr-134 and Thr-137. Residue Ser-138 is modified to Phosphoserine.

It belongs to the globin family. In terms of assembly, heterotetramer of two alpha chains and two beta chains. In terms of tissue distribution, red blood cells.

Functionally, involved in oxygen transport from the lung to the various peripheral tissues. In terms of biological role, hemopressin acts as an antagonist peptide of the cannabinoid receptor CNR1. Hemopressin-binding efficiently blocks cannabinoid receptor CNR1 and subsequent signaling. In Camelus dromedarius (Dromedary), this protein is Hemoglobin subunit alpha (HBA).